A 247-amino-acid chain; its full sequence is Chymase (247 aa).

The signal sequence occupies residues 1-19; the sequence is MNLHALCLLLLLLGSSTKA. The propeptide at 20 to 21 is activation peptide; sequence GE. The Peptidase S1 domain maps to 22-245; sequence IIGGTECIPH…YRPWINKILR (224 aa). Cysteines 51 and 67 form a disulfide. The active-site Charge relay system is His-66. An N-linked (GlcNAc...) asparagine glycan is attached at Asn-80. Asp-110 acts as the Charge relay system in catalysis. Disulfide bonds link Cys-144–Cys-209 and Cys-175–Cys-188. Ser-203 functions as the Charge relay system in the catalytic mechanism.

This sequence belongs to the peptidase S1 family. Granzyme subfamily. Mast cells.

The protein resides in the secreted. Its subcellular location is the cytoplasmic granule. It carries out the reaction Preferential cleavage: Phe-|-Xaa &gt; Tyr-|-Xaa &gt; Trp-|-Xaa &gt; Leu-|-Xaa.. Major secreted protease of mast cells with suspected roles in vasoactive peptide generation, extracellular matrix degradation, and regulation of gland secretion. The chain is Chymase (Cma1) from Rattus norvegicus (Rat).